Here is a 151-residue protein sequence, read N- to C-terminus: Spore coat polysaccharide biosynthesis protein SpsL (151 aa).

This sequence to dTDP-4-dehydrorhamnose reductase.

It functions in the pathway spore coat biogenesis; spore coat polysaccharide biosynthesis. This chain is Spore coat polysaccharide biosynthesis protein SpsL (spsL), found in Bacillus subtilis (strain 168).